Consider the following 425-residue polypeptide: SWI/SNF and RSC complexes subunit ssr3 (425 aa).

Positions 1–16 are enriched in polar residues; sequence MSNNSRLPENGVQSGN. A disordered region spans residues 1 to 23; the sequence is MSNNSRLPENGVQSGNGEDAELK. In terms of domain architecture, SWIB/MDM2 spans 201-278; sequence EHPERYKLSK…PELMNRFLEP (78 aa).

It belongs to the SMARCD family. As to quaternary structure, component of the RSC complex composed of at least arp9, arp42, rsc1, rsc4, rsc7, rsc9, rsc58, sfh1, snf21, ssr1, ssr2, ssr3 and ssr4. The complex interacts with histone and histone variant components of centromeric chromatin. Component of the SWI/SNF global transcription activator complex composed of at least arp9, arp42, snf5, snf22, snf30, sbf59, sol1, ssr1, ssr2, ssr3, ssr4 and tfg3.

Its subcellular location is the cytoplasm. The protein localises to the nucleus. In terms of biological role, component of the chromatin structure remodeling complex (RSC), which is involved in transcription regulation and nucleosome positioning. Controls particularly membrane and organelle development genes. Part of the SWI/SNF complex, an ATP-dependent chromatin remodeling complex, required for the positive and negative regulation of gene expression of a large number of genes. It changes chromatin structure by altering DNA-histone contacts within a nucleosome, leading eventually to a change in nucleosome position, thus facilitating or repressing binding of gene-specific transcription factors. This is SWI/SNF and RSC complexes subunit ssr3 (ssr3) from Schizosaccharomyces pombe (strain 972 / ATCC 24843) (Fission yeast).